Reading from the N-terminus, the 90-residue chain is MNHLILIVAMCLMVIGVQCLKDGYLYDDVDCKFSCWDNEYCRKLCKSKKAVGGYCWRWRFSCYCTGLPDNEKTEGTYKCGQGRFLMGKDK.

An N-terminal signal peptide occupies residues 1 to 19 (MNHLILIVAMCLMVIGVQC). Residues 21 to 80 (KDGYLYDDVDCKFSCWDNEYCRKLCKSKKAVGGYCWRWRFSCYCTGLPDNEKTEGTYKCG) form the LCN-type CS-alpha/beta domain. 4 cysteine pairs are disulfide-bonded: C31/C79, C35/C55, C41/C62, and C45/C64.

This sequence belongs to the long (4 C-C) scorpion toxin superfamily. Sodium channel inhibitor family. Alpha subfamily. As to expression, expressed by the venom gland.

Its subcellular location is the secreted. Binds voltage-independently at site-3 of voltage-gated sodium channels (Nav) and inhibits the inactivation of the activated channels, thereby blocking neuronal transmission. The sequence is that of Neurotoxin LmNaTx19 from Lychas mucronatus (Chinese swimming scorpion).